Consider the following 202-residue polypeptide: Cytochrome c biogenesis ATP-binding export protein CcmA (202 aa).

The ABC transporter domain occupies 3–200 (LAAENLSGER…EGTQELKMGA (198 aa)). An ATP-binding site is contributed by 35-42 (GPNGAGKS).

Belongs to the ABC transporter superfamily. CcmA exporter (TC 3.A.1.107) family. In terms of assembly, the complex is composed of two ATP-binding proteins (CcmA) and two transmembrane proteins (CcmB).

It is found in the cell inner membrane. It carries out the reaction heme b(in) + ATP + H2O = heme b(out) + ADP + phosphate + H(+). Its function is as follows. Part of the ABC transporter complex CcmAB involved in the biogenesis of c-type cytochromes; once thought to export heme, this seems not to be the case, but its exact role is uncertain. Responsible for energy coupling to the transport system. The sequence is that of Cytochrome c biogenesis ATP-binding export protein CcmA from Chelativorans sp. (strain BNC1).